A 210-amino-acid chain; its full sequence is MDLESEIIQLVRQNIRPKFPSLNDEQQARLDNALKYDVNYDILKKELVEYIDDWKRNEYYDVLTNIGDLQRLDLGNMLNGDGVSFPKLHSDLANLPRFRLIDNENEMDQSLLHKYDSLRTRLIEKCRAIELIRSATNTDVNYQDINSMLSVVELRQWRDEIQMEWKELAQNLELILKTWPDLTEEKRSKLLQLIDSSSLKSILHIKDNIE.

The protein belongs to the NKP1 family. Component of the inner kinetochore constitutive centromere-associated network (CCAN) (also known as central kinetochore CTF19 complex in yeast). NKP1 interacts directly with OKP1 and AME1.

Its subcellular location is the nucleus. It is found in the chromosome. The protein localises to the centromere. The protein resides in the kinetochore. Its function is as follows. Component of the kinetochore, a multiprotein complex that assembles on centromeric DNA and attaches chromosomes to spindle microtubules, mediating chromosome segregation and sister chromatid segregation during meiosis and mitosis. Component of the inner kinetochore constitutive centromere-associated network (CCAN), which serves as a structural platform for outer kinetochore assembly. This chain is Inner kinetochore subunit NKP1 (NKP1), found in Kluyveromyces lactis (strain ATCC 8585 / CBS 2359 / DSM 70799 / NBRC 1267 / NRRL Y-1140 / WM37) (Yeast).